A 362-amino-acid chain; its full sequence is Probable dual-specificity RNA methyltransferase RlmN (362 aa).

The active-site Proton acceptor is the Glu105. Residues 111–344 (HEYGNSICVT…VTIRREQGHD (234 aa)) enclose the Radical SAM core domain. Cys118 and Cys349 form a disulfide bridge. Residues Cys125, Cys129, and Cys132 each coordinate [4Fe-4S] cluster. S-adenosyl-L-methionine contacts are provided by residues 175–176 (GE), Ser207, 230–232 (SLH), and Asn306. The S-methylcysteine intermediate role is filled by Cys349.

This sequence belongs to the radical SAM superfamily. RlmN family. The cofactor is [4Fe-4S] cluster.

It is found in the cytoplasm. The catalysed reaction is adenosine(2503) in 23S rRNA + 2 reduced [2Fe-2S]-[ferredoxin] + 2 S-adenosyl-L-methionine = 2-methyladenosine(2503) in 23S rRNA + 5'-deoxyadenosine + L-methionine + 2 oxidized [2Fe-2S]-[ferredoxin] + S-adenosyl-L-homocysteine. The enzyme catalyses adenosine(37) in tRNA + 2 reduced [2Fe-2S]-[ferredoxin] + 2 S-adenosyl-L-methionine = 2-methyladenosine(37) in tRNA + 5'-deoxyadenosine + L-methionine + 2 oxidized [2Fe-2S]-[ferredoxin] + S-adenosyl-L-homocysteine. Its function is as follows. Specifically methylates position 2 of adenine 2503 in 23S rRNA and position 2 of adenine 37 in tRNAs. The sequence is that of Probable dual-specificity RNA methyltransferase RlmN from Bacillus thuringiensis subsp. konkukian (strain 97-27).